Reading from the N-terminus, the 965-residue chain is Phosphoenolpyruvate carboxylase 1 (965 aa).

Residue serine 11 is modified to Phosphoserine. Residue histidine 172 is part of the active site. Tryptophan 283, arginine 450, and aspartate 597 together coordinate D-glucose 6-phosphate. Lysine 600 is an active-site residue. Arginine 635 contributes to the D-glucose 6-phosphate binding site. Arginine 641 is an active-site residue. Arginine 641 contacts L-aspartate. Threonine 665 contacts D-glucose 6-phosphate. Glutamine 673 lines the L-aspartate pocket. Residues arginine 753 and 767–769 contribute to the D-glucose 6-phosphate site; that span reads RAI. Positions 829, 888, and 963 each coordinate L-aspartate.

The protein belongs to the PEPCase type 1 family. As to quaternary structure, homotetramer. Mg(2+) serves as cofactor. As to expression, expressed in roots and stems and at low levels in leaves. Preferentially expressed in the phloem and in root tips.

The protein localises to the cytoplasm. The enzyme catalyses oxaloacetate + phosphate = phosphoenolpyruvate + hydrogencarbonate. Its activity is regulated as follows. Activated by the allosteric regulator glucose-6-phosphate. Inhibited by malate and aspartate. Up regulated by light-reversible phosphorylation. Functionally, through the carboxylation of phosphoenolpyruvate (PEP) it forms oxaloacetate, a four-carbon dicarboxylic acid source for the tricarboxylic acid cycle. May be involved in phloem loading with sucrose and in anions and cations uptake and amino acid biosynthesis in roots. The polypeptide is Phosphoenolpyruvate carboxylase 1 (Flaveria trinervia (Clustered yellowtops)).